A 129-amino-acid polypeptide reads, in one-letter code: Class I hydrophobin 11 (129 aa).

The N-terminal stretch at 1–19 (MRLTPLLAALALPLLTVLA) is a signal peptide. 4 disulfide bridges follow: Cys-48-Cys-106, Cys-55-Cys-100, Cys-56-Cys-89, and Cys-107-Cys-122.

The protein belongs to the fungal hydrophobin family. In terms of assembly, self-assembles to form functional amyloid fibrils called rodlets. Self-assembly into fibrillar rodlets occurs spontaneously at hydrophobic:hydrophilic interfaces and the rodlets further associate laterally to form amphipathic monolayers.

Its subcellular location is the secreted. It is found in the cell wall. In terms of biological role, aerial growth, conidiation, and dispersal of filamentous fungi in the environment rely upon a capability of their secreting small amphipathic proteins called hydrophobins (HPBs) with low sequence identity. Class I can self-assemble into an outermost layer of rodlet bundles on aerial cell surfaces, conferring cellular hydrophobicity that supports fungal growth, development and dispersal; whereas Class II form highly ordered films at water-air interfaces through intermolecular interactions but contribute nothing to the rodlet structure. The protein is Class I hydrophobin 11 of Pleurotus ostreatus (strain PC15) (Oyster mushroom).